A 757-amino-acid chain; its full sequence is Kin of IRRE-like protein 1 (757 aa).

Residues 1–16 (MLSLLVWILTLSDTFS) form the signal peptide. Residues 17-499 (QGTQTRFSQE…REVLPVGIIA (483 aa)) lie on the Extracellular side of the membrane. 5 Ig-like C2-type domains span residues 21–115 (TRFS…AKLT), 120–216 (PEDT…TSIE), 223–299 (PTVT…TNVS), 308–387 (PRIV…EVPL), and 392–488 (PPII…IQLE). Residues cysteine 42 and cysteine 100 are joined by a disulfide bond. 2 N-linked (GlcNAc...) asparagine glycosylation sites follow: asparagine 46 and asparagine 140. 2 cysteine pairs are disulfide-bonded: cysteine 143–cysteine 200 and cysteine 244–cysteine 287. N-linked (GlcNAc...) asparagine glycosylation occurs at asparagine 297. The cysteines at positions 329 and 371 are disulfide-linked. The Cell attachment site signature appears at 405–407 (RGD). Cysteine 413 and cysteine 472 are oxidised to a cystine. N-linked (GlcNAc...) asparagine glycosylation occurs at asparagine 471. The chain crosses the membrane as a helical span at residues 500–520 (GATIGASILLIFFFIALVFFL). The Cytoplasmic portion of the chain corresponds to 521–757 (YRRRKGSRKD…RFQQRMQTHV (237 aa)). Serine 574 is subject to Phosphoserine. Tyrosine 605 and tyrosine 606 each carry phosphotyrosine; by FYN. Tyrosine 622 and tyrosine 625 each carry phosphotyrosine. The segment at 649 to 679 (QLNTYSRGPASDYGPEPTPPGPAAPAGTDTT) is disordered. Tyrosine 724 carries the phosphotyrosine modification.

Belongs to the immunoglobulin superfamily. In terms of assembly, interacts with TJP1/ZO-1 and with NPHS2/podocin (via the C-terminus). Interacts with NPHS1/nephrin (via the Ig-like domains); this interaction is dependent on KIRREL1 glycosylation. Homodimer (via the Ig-like domains). Interacts when tyrosine-phosphorylated with GRB2. Post-translationally, phosphorylation probably regulates the interaction with NSH2. Phosphorylated at Tyr-605 and Tyr-606 by FYN, leading to GRB2 binding. N-glycosylated. Abundantly expressed in kidney. Specifically expressed in podocytes of kidney glomeruli.

It is found in the cell membrane. Functionally, required for proper function of the glomerular filtration barrier. It is involved in the maintenance of a stable podocyte architecture with interdigitating foot processes connected by specialized cell-cell junctions, known as the slit diaphragm. It is a signaling protein that needs the presence of TEC kinases to fully trans-activate the transcription factor AP-1. The chain is Kin of IRRE-like protein 1 from Homo sapiens (Human).